Reading from the N-terminus, the 286-residue chain is Nucleotide-binding protein APL_0334 (286 aa).

8–15 (GRSGSGKS) provides a ligand contact to ATP. 56 to 59 (DIRN) is a GTP binding site.

Belongs to the RapZ-like family.

Functionally, displays ATPase and GTPase activities. The chain is Nucleotide-binding protein APL_0334 from Actinobacillus pleuropneumoniae serotype 5b (strain L20).